Consider the following 200-residue polypeptide: UPF0488 protein CG14286 (200 aa).

2 disordered regions span residues 1-28 and 139-174; these read MHKRRTAKSINKPPPIQGAIKKPTPVAE and KDFRFNFPSPAEDTSSKEPQPVQDFDPSSLQPAEAG.

Belongs to the UPF0488 family.

The chain is UPF0488 protein CG14286 from Drosophila melanogaster (Fruit fly).